Consider the following 520-residue polypeptide: Glutamate--cysteine ligase (520 aa).

Belongs to the glutamate--cysteine ligase type 1 family. Type 1 subfamily.

The catalysed reaction is L-cysteine + L-glutamate + ATP = gamma-L-glutamyl-L-cysteine + ADP + phosphate + H(+). It participates in sulfur metabolism; glutathione biosynthesis; glutathione from L-cysteine and L-glutamate: step 1/2. The protein is Glutamate--cysteine ligase of Leptospira interrogans serogroup Icterohaemorrhagiae serovar copenhageni (strain Fiocruz L1-130).